Reading from the N-terminus, the 398-residue chain is DNA polymerase IV (398 aa).

A UmuC domain is found at 5-187 (IFLVDMNAFF…LSIKSMHGVG (183 aa)). Mg(2+) is bound by residues Asp9 and Asp105. Glu106 is a catalytic residue.

It belongs to the DNA polymerase type-Y family. Monomer. Mg(2+) serves as cofactor.

The protein resides in the cytoplasm. The enzyme catalyses DNA(n) + a 2'-deoxyribonucleoside 5'-triphosphate = DNA(n+1) + diphosphate. In terms of biological role, poorly processive, error-prone DNA polymerase involved in untargeted mutagenesis. Copies undamaged DNA at stalled replication forks, which arise in vivo from mismatched or misaligned primer ends. These misaligned primers can be extended by PolIV. Exhibits no 3'-5' exonuclease (proofreading) activity. May be involved in translesional synthesis, in conjunction with the beta clamp from PolIII. This Alkaliphilus oremlandii (strain OhILAs) (Clostridium oremlandii (strain OhILAs)) protein is DNA polymerase IV.